Here is a 377-residue protein sequence, read N- to C-terminus: tRNA(Met) cytidine acetate ligase (377 aa).

Residues valine 7–histidine 20, glycine 100, asparagine 153, and arginine 178 each bind ATP.

Belongs to the TmcAL family.

It localises to the cytoplasm. The enzyme catalyses cytidine(34) in elongator tRNA(Met) + acetate + ATP = N(4)-acetylcytidine(34) in elongator tRNA(Met) + AMP + diphosphate. In terms of biological role, catalyzes the formation of N(4)-acetylcytidine (ac(4)C) at the wobble position of elongator tRNA(Met), using acetate and ATP as substrates. First activates an acetate ion to form acetyladenylate (Ac-AMP) and then transfers the acetyl group to tRNA to form ac(4)C34. In Staphylococcus saprophyticus subsp. saprophyticus (strain ATCC 15305 / DSM 20229 / NCIMB 8711 / NCTC 7292 / S-41), this protein is tRNA(Met) cytidine acetate ligase.